Consider the following 122-residue polypeptide: MTNEIKATFDVTTLEGRMKILNAKNAGGASLKTCVDGTIIEAVGIAQYQQESDTYGDMKEETVTAIFTADGDVISAISKTVAEAATEIIDLVKEFNLDTFKVKVSKQKSSKGNEFFSLLLVG.

The protein belongs to the phi29likevirus single-strand-binding protein family. Monomer.

Single-stranded DNA binding protein required for the elongation during viral DNA replication by strand displacement. Displaced viral DNA strands are transiently coated with the ssDNA-binding protein and therefore protected againt nucleases. The latter is then probably removed by the replisome that performs lagging strand synthesis or during the events that lead up to the recombination process. Has helix-destabilizing activity since it removes secondary structure from the ssDNA in replicative intermediates. This is Single-stranded DNA-binding protein (5) from Bacillus subtilis (Bacteriophage B103).